A 387-amino-acid chain; its full sequence is Cytochrome b (387 aa).

4 helical membrane-spanning segments follow: residues 32 to 52, 76 to 98, 113 to 133, and 179 to 199; these read FGSLLACVLVIQIVIGILLAC, FLLRAFHANGASFFFIFLYLHIG, TWNIGVIIFLLTIITAFLGYC, and FFSLHYLMPFVIAALSVMHLI. H82 and H96 together coordinate heme b. Residues H183 and H197 each contribute to the heme b site. Residue H202 participates in a ubiquinone binding. 4 helical membrane passes run 225–245, 289–309, 321–341, and 348–368; these read YLIKDLITIFIFLIGINYMAF, QLGVIAMLLSILVLLLLPLLD, FGKFFFWTFVADFVILAWIGG, and FITIGAIATIFYFSYFFILIP.

Belongs to the cytochrome b family. Fungal cytochrome b-c1 complex contains 10 subunits; 3 respiratory subunits, 2 core proteins and 5 low-molecular weight proteins. Cytochrome b-c1 complex is a homodimer. Requires heme b as cofactor.

It is found in the mitochondrion inner membrane. Functionally, component of the ubiquinol-cytochrome c reductase complex (complex III or cytochrome b-c1 complex) that is part of the mitochondrial respiratory chain. The b-c1 complex mediates electron transfer from ubiquinol to cytochrome c. Contributes to the generation of a proton gradient across the mitochondrial membrane that is then used for ATP synthesis. In Schizosaccharomyces pombe (strain 972 / ATCC 24843) (Fission yeast), this protein is Cytochrome b (cob).